The following is a 311-amino-acid chain: tRNA-cytidine(32) 2-sulfurtransferase (311 aa).

A PP-loop motif motif is present at residues 47 to 52 (SGGKDS). Cys-122, Cys-125, and Cys-213 together coordinate [4Fe-4S] cluster.

This sequence belongs to the TtcA family. In terms of assembly, homodimer. Mg(2+) serves as cofactor. The cofactor is [4Fe-4S] cluster.

Its subcellular location is the cytoplasm. The enzyme catalyses cytidine(32) in tRNA + S-sulfanyl-L-cysteinyl-[cysteine desulfurase] + AH2 + ATP = 2-thiocytidine(32) in tRNA + L-cysteinyl-[cysteine desulfurase] + A + AMP + diphosphate + H(+). It participates in tRNA modification. Its function is as follows. Catalyzes the ATP-dependent 2-thiolation of cytidine in position 32 of tRNA, to form 2-thiocytidine (s(2)C32). The sulfur atoms are provided by the cysteine/cysteine desulfurase (IscS) system. This is tRNA-cytidine(32) 2-sulfurtransferase from Salmonella arizonae (strain ATCC BAA-731 / CDC346-86 / RSK2980).